The sequence spans 361 residues: AP2/ERF and B3 domain-containing transcription repressor TEM1 (361 aa).

A disordered region spans residues 1–73 (MEYSCVDDSS…SRKLPSSKYK (73 aa)). Residues 9 to 27 (SSTTSESLSISTTPKPTTT) are compositionally biased toward low complexity. Residues 71–126 (KYKGVVPQPNGRWGAQIYEKHQRVWLGTFNEEEEAASSYDIAVRRFRGRDAVTNFK) constitute a DNA-binding region (AP2/ERF). Positions 195–306 (FEKTVTPSDV…QLYIHWKVRS (112 aa)) form a DNA-binding region, TF-B3.

Belongs to the AP2/ERF transcription factor family. RAV subfamily. Interacts with FT. In terms of tissue distribution, expressed in leaves.

It localises to the nucleus. Transcriptional repressor of flowering time on long day plants. Acts directly on FT expression by binding 5'-CAACA-3' and 5'-CACCTG-3 sequences. Functionally redundant with TEM2. This is AP2/ERF and B3 domain-containing transcription repressor TEM1 (TEM1) from Arabidopsis thaliana (Mouse-ear cress).